The primary structure comprises 241 residues: Probable septum site-determining protein MinC (241 aa).

Residues 109–135 (PSGARERKVDPSSKTPAKPAEPTYRPT) are disordered.

The protein belongs to the MinC family. In terms of assembly, interacts with MinD and FtsZ.

Its function is as follows. Cell division inhibitor that blocks the formation of polar Z ring septums. Rapidly oscillates between the poles of the cell to destabilize FtsZ filaments that have formed before they mature into polar Z rings. Prevents FtsZ polymerization. In Stutzerimonas stutzeri (strain A1501) (Pseudomonas stutzeri), this protein is Probable septum site-determining protein MinC.